Consider the following 205-residue polypeptide: uncharacterized protein (205 aa).

A coiled-coil region spans residues 10–75 (QDLLSAVDQQ…AANLMTVMTD (66 aa)). A disordered region spans residues 111–138 (PLSNTNNEQTSPPASGKTSETPKKNPTN). A compositionally biased stretch (polar residues) spans 112-138 (LSNTNNEQTSPPASGKTSETPKKNPTN).

The protein belongs to the asfivirus K205R family.

It localises to the host cytoplasm. Functionally, induces host endoplasmic reticulum stress and consequently activates autophagy and NF-kappa-B signaling pathway. In turn, may induce autophagy-mediated STING1 degradation and innate immune evasion. This is an uncharacterized protein from Ornithodoros (relapsing fever ticks).